The primary structure comprises 494 residues: Membrane-bound lytic murein transglycosylase F 1 (494 aa).

A signal peptide spans 1–24 (MRIMAVRLVAGAITLALMAYAWLA). The non-LT domain stretch occupies residues 25–270 (WERARDPEPI…TLLEEHFGHL (246 aa)). The tract at residues 271–494 (GRFDYVGFRA…APLPADPPAD (224 aa)) is LT domain. The active site involves E317. Positions 464–494 (QVPAGEALGEPPLPTPPAPPGAPLPADPPAD) are disordered. Over residues 474-494 (PPLPTPPAPPGAPLPADPPAD) the composition is skewed to pro residues.

The protein in the N-terminal section; belongs to the bacterial solute-binding protein 3 family. In the C-terminal section; belongs to the transglycosylase Slt family.

Its subcellular location is the cell outer membrane. It carries out the reaction Exolytic cleavage of the (1-&gt;4)-beta-glycosidic linkage between N-acetylmuramic acid (MurNAc) and N-acetylglucosamine (GlcNAc) residues in peptidoglycan, from either the reducing or the non-reducing ends of the peptidoglycan chains, with concomitant formation of a 1,6-anhydrobond in the MurNAc residue.. In terms of biological role, murein-degrading enzyme that degrades murein glycan strands and insoluble, high-molecular weight murein sacculi, with the concomitant formation of a 1,6-anhydromuramoyl product. Lytic transglycosylases (LTs) play an integral role in the metabolism of the peptidoglycan (PG) sacculus. Their lytic action creates space within the PG sacculus to allow for its expansion as well as for the insertion of various structures such as secretion systems and flagella. This chain is Membrane-bound lytic murein transglycosylase F 1, found in Alkalilimnicola ehrlichii (strain ATCC BAA-1101 / DSM 17681 / MLHE-1).